The chain runs to 579 residues: Glutamine--tRNA ligase (579 aa).

Residues 41-51 (PEPNGYLHIGH) carry the 'HIGH' region motif. Residues 42–44 (EPN) and 48–54 (HIGHAKA) each bind ATP. 2 residues coordinate L-glutamine: aspartate 74 and tyrosine 218. ATP contacts are provided by residues threonine 237, 285-286 (RL), and 293-295 (MSK). Residues 292–296 (VMSKR) carry the 'KMSKS' region motif.

The protein belongs to the class-I aminoacyl-tRNA synthetase family. In terms of assembly, monomer.

The protein localises to the cytoplasm. The enzyme catalyses tRNA(Gln) + L-glutamine + ATP = L-glutaminyl-tRNA(Gln) + AMP + diphosphate. The protein is Glutamine--tRNA ligase of Xanthomonas campestris pv. campestris (strain 8004).